The chain runs to 305 residues: Target of rapamycin complex subunit LST8-1 (305 aa).

7 WD repeats span residues 1–30, 33–71, 76–115, 117–156, 160–199, 209–248, and 251–292; these read MSQP…CYRT, YPDS…PQPV, SHTN…CQKE, ESVA…CSCE, EVDT…QTMT, AHNG…LEKV, and GHQR…KVYQ.

This sequence belongs to the WD repeat LST8 family. In terms of assembly, the target of rapamycin complex 1 (TORC1) is composed of at least RAPTOR, LST8 and TOR. Interacts with TOR. In terms of tissue distribution, expressed in the root central cylinder, root tips, emerging lateral roots, vasculature of cotyledons, leaf stomata, leaf stipules, anthers, pollen, filaments, and vasculature of petals and sepals.

Its subcellular location is the endosome. Functionally, component of TORC1 complex, which is an essential cell growth regulator that controls plant development. Acts by activating transcription, protein synthesis and ribosome biogenesis, and inhibiting mRNA degradation and autophagy. Involved in regulating amino acid accumulation and the synthesis of myo-inositol and raffinose during plant adaptation to long days. Involved in the regulation of plant growth and abscisic acid (ABA) accumulation. Acts as a positive regulation of the ABA biosynthetic genes ZEP, NCED3 and AAO3, and negative regulator of the ABA catabolic genes CYP707A2 and CYP707A3. The sequence is that of Target of rapamycin complex subunit LST8-1 from Arabidopsis thaliana (Mouse-ear cress).